The following is a 208-amino-acid chain: MTNVLFIKANGLPAERSVSVALYEIFLTEYKKSHPDDNVTELDLFEADLPYYDVTMMSGLHKEAAGETLSPEEKRLADIANSYLDQFLAADKIVMAFPLWNFSIPAQFLTYLFYLNQAGKTFKYTANGPVGLVADKKIALLNARGGIYSDGPMQSFEMSLNYVKNVLAHFGISEPEMVIVEGHNAKPDQAKDIISAGAKEAVELAKIF.

FMN is bound at residue 17–19 (SVS).

The protein belongs to the azoreductase type 1 family. In terms of assembly, homodimer. The cofactor is FMN.

The catalysed reaction is 2 a quinone + NADH + H(+) = 2 a 1,4-benzosemiquinone + NAD(+). It catalyses the reaction N,N-dimethyl-1,4-phenylenediamine + anthranilate + 2 NAD(+) = 2-(4-dimethylaminophenyl)diazenylbenzoate + 2 NADH + 2 H(+). In terms of biological role, quinone reductase that provides resistance to thiol-specific stress caused by electrophilic quinones. Also exhibits azoreductase activity. Catalyzes the reductive cleavage of the azo bond in aromatic azo compounds to the corresponding amines. In Listeria monocytogenes serovar 1/2a (strain ATCC BAA-679 / EGD-e), this protein is FMN-dependent NADH:quinone oxidoreductase 1.